Here is a 233-residue protein sequence, read N- to C-terminus: MADS-box transcription factor 56 (233 aa).

The 61-residue stretch at 1–61 (MVRGRTELKR…GRLYEFASAP (61 aa)) folds into the MADS-box domain. In terms of domain architecture, K-box spans 87–177 (IQQVKDDTLG…RGKHRNLEAA (91 aa)).

The protein resides in the nucleus. Its function is as follows. Probable transcription factor. The chain is MADS-box transcription factor 56 (MADS56) from Oryza sativa subsp. japonica (Rice).